Reading from the N-terminus, the 933-residue chain is Valine--tRNA ligase (933 aa).

The segment at 1–24 is disordered; that stretch reads MIERVKTTKLSEASGLPKTYDPVG. The short motif at 57–67 is the 'HIGH' region element; sequence PNVTGSLHMGH. The 'KMSKS' region signature appears at 557–561; it reads KMSKS. Lysine 560 is a binding site for ATP. A coiled-coil region spans residues 866–932; it reads LIDIASLRSR…RLVKERLMGL (67 aa).

The protein belongs to the class-I aminoacyl-tRNA synthetase family. ValS type 1 subfamily. Monomer.

The protein resides in the cytoplasm. The catalysed reaction is tRNA(Val) + L-valine + ATP = L-valyl-tRNA(Val) + AMP + diphosphate. In terms of biological role, catalyzes the attachment of valine to tRNA(Val). As ValRS can inadvertently accommodate and process structurally similar amino acids such as threonine, to avoid such errors, it has a 'posttransfer' editing activity that hydrolyzes mischarged Thr-tRNA(Val) in a tRNA-dependent manner. The sequence is that of Valine--tRNA ligase from Prochlorococcus marinus (strain NATL2A).